Here is a 115-residue protein sequence, read N- to C-terminus: uncharacterized protein (115 aa).

The tract at residues 1–86 (RRPARSGGDG…LSSQLVRPSR (86 aa)) is disordered.

This is an uncharacterized protein from Homo sapiens (Human).